The chain runs to 122 residues: Small ribosomal subunit protein uS13 (122 aa).

Residues 92–122 (HRMGLPVRGQRTKTNARTRKGPSKPVSGKKK) form a disordered region. The segment covering 101–122 (QRTKTNARTRKGPSKPVSGKKK) has biased composition (basic residues).

The protein belongs to the universal ribosomal protein uS13 family. In terms of assembly, part of the 30S ribosomal subunit. Forms a loose heterodimer with protein S19. Forms two bridges to the 50S subunit in the 70S ribosome.

In terms of biological role, located at the top of the head of the 30S subunit, it contacts several helices of the 16S rRNA. In the 70S ribosome it contacts the 23S rRNA (bridge B1a) and protein L5 of the 50S subunit (bridge B1b), connecting the 2 subunits; these bridges are implicated in subunit movement. Contacts the tRNAs in the A and P-sites. This is Small ribosomal subunit protein uS13 from Ruminiclostridium cellulolyticum (strain ATCC 35319 / DSM 5812 / JCM 6584 / H10) (Clostridium cellulolyticum).